A 174-amino-acid chain; its full sequence is Adenine phosphoribosyltransferase (174 aa).

This sequence belongs to the purine/pyrimidine phosphoribosyltransferase family. Homodimer.

It localises to the cytoplasm. It carries out the reaction AMP + diphosphate = 5-phospho-alpha-D-ribose 1-diphosphate + adenine. Its pathway is purine metabolism; AMP biosynthesis via salvage pathway; AMP from adenine: step 1/1. In terms of biological role, catalyzes a salvage reaction resulting in the formation of AMP, that is energically less costly than de novo synthesis. In Nitrosomonas eutropha (strain DSM 101675 / C91 / Nm57), this protein is Adenine phosphoribosyltransferase.